Here is a 206-residue protein sequence, read N- to C-terminus: Small ribosomal subunit protein uS4 (206 aa).

In terms of domain architecture, S4 RNA-binding spans 96–156 (GRLDNVVYRM…EKAKKQARIK (61 aa)).

This sequence belongs to the universal ribosomal protein uS4 family. In terms of assembly, part of the 30S ribosomal subunit. Contacts protein S5. The interaction surface between S4 and S5 is involved in control of translational fidelity.

One of the primary rRNA binding proteins, it binds directly to 16S rRNA where it nucleates assembly of the body of the 30S subunit. Functionally, with S5 and S12 plays an important role in translational accuracy. This Aeromonas salmonicida (strain A449) protein is Small ribosomal subunit protein uS4.